The following is a 296-amino-acid chain: Probable xyloglucan endotransglucosylase/hydrolase 1 (296 aa).

The signal sequence occupies residues 1–22 (MGIIKGVLFSIVLINLSLVVFC). The 199-residue stretch at 23 to 221 (GYPRRPVDVP…WANAPFTASY (199 aa)) folds into the GH16 domain. Glutamate 107 acts as the Nucleophile in catalysis. Glutamate 111 acts as the Proton donor in catalysis. Glutamate 111 contributes to the xyloglucan binding site. The N-linked (GlcNAc...) asparagine glycan is linked to asparagine 115. Xyloglucan-binding positions include 124–126 (QTN), 134–136 (NRE), 200–201 (DW), and glycine 205. 2 disulfides stabilise this stretch: cysteine 229/cysteine 240 and cysteine 277/cysteine 290. Residue arginine 282 coordinates xyloglucan.

It belongs to the glycosyl hydrolase 16 family. XTH group 1 subfamily. Contains at least one intrachain disulfide bond essential for its enzymatic activity.

The protein localises to the secreted. The protein resides in the cell wall. It localises to the extracellular space. Its subcellular location is the apoplast. It catalyses the reaction breaks a beta-(1-&gt;4) bond in the backbone of a xyloglucan and transfers the xyloglucanyl segment on to O-4 of the non-reducing terminal glucose residue of an acceptor, which can be a xyloglucan or an oligosaccharide of xyloglucan.. In terms of biological role, catalyzes xyloglucan endohydrolysis (XEH) and/or endotransglycosylation (XET). Cleaves and religates xyloglucan polymers, an essential constituent of the primary cell wall, and thereby participates in cell wall construction of growing tissues. This is Probable xyloglucan endotransglucosylase/hydrolase 1 (XTH1) from Solanum lycopersicum (Tomato).